The chain runs to 131 residues: C-glycoside deglycosidase beta subunit (131 aa).

Belongs to the C-glycoside deglycosidase beta subunit family. In terms of assembly, heterodimer composed of an alpha subunit (CarB1) and a beta subunit (CarC1). Mg(2+) is required as a cofactor.

The enzyme catalyses 3''-dehydroisovitexin = 1,5-anhydro-D-erythro-hex-1-en-3-ulose + apigenin. Its activity is regulated as follows. Activity is strongly reduced in the presence of chelating agents. Carbon-carbon bond-cleaving enzyme which participates in the metabolism of C-glycosides. Acts on the C6-glycosylated compound 3''-dehydroisovitexin (3''-oxo-isovitexin). Shows weak activity with 3''-dehydroisoorientin (3''-oxo-homoorientin) and 3'-dehydromangiferin (3'-oxo-mangiferin). This is C-glycoside deglycosidase beta subunit from Arthrobacter globiformis (strain ATCC 8010 / DSM 20124 / JCM 1332 / NBRC 12137 / NCIMB 8907 / NRRL B-2979 / 168).